The following is a 254-amino-acid chain: MVPWLGPDDPFPPIERALGPATGAPGLLAASADLLPSRLIDAYLRGIFPWYSDGQPVLWWSPDPRMILVPAEFKVSPSLRKTLKRVLREPEWEVRVDHDFPGVMRACAQAPRRGQRGTWITAEIIDAYTSLYRSGNAHSIETWHDGRRVGGLYGVSFGRMFFGESMYADATDASKIALATLVAHLREQGLEMIDCQQNTSHLASLGGREIARKAFVAHVRSAVAEPPIPWQFDKRVLAALTGRAEAAAPSGIER.

Belongs to the L/F-transferase family.

It localises to the cytoplasm. The catalysed reaction is N-terminal L-lysyl-[protein] + L-leucyl-tRNA(Leu) = N-terminal L-leucyl-L-lysyl-[protein] + tRNA(Leu) + H(+). It catalyses the reaction N-terminal L-arginyl-[protein] + L-leucyl-tRNA(Leu) = N-terminal L-leucyl-L-arginyl-[protein] + tRNA(Leu) + H(+). The enzyme catalyses L-phenylalanyl-tRNA(Phe) + an N-terminal L-alpha-aminoacyl-[protein] = an N-terminal L-phenylalanyl-L-alpha-aminoacyl-[protein] + tRNA(Phe). Functionally, functions in the N-end rule pathway of protein degradation where it conjugates Leu, Phe and, less efficiently, Met from aminoacyl-tRNAs to the N-termini of proteins containing an N-terminal arginine or lysine. This is Leucyl/phenylalanyl-tRNA--protein transferase from Burkholderia lata (strain ATCC 17760 / DSM 23089 / LMG 22485 / NCIMB 9086 / R18194 / 383).